The following is a 243-amino-acid chain: Protein YagJ (243 aa).

The chain is Protein YagJ (yagJ) from Escherichia coli (strain K12).